The following is a 308-amino-acid chain: Pyrroline-5-carboxylate reductase 3 (308 aa).

It belongs to the pyrroline-5-carboxylate reductase family. Homodecamer; composed of 5 homodimers.

It is found in the cytoplasm. It carries out the reaction L-proline + NADP(+) = (S)-1-pyrroline-5-carboxylate + NADPH + 2 H(+). It catalyses the reaction L-proline + NAD(+) = (S)-1-pyrroline-5-carboxylate + NADH + 2 H(+). It participates in amino-acid biosynthesis; L-proline biosynthesis; L-proline from L-glutamate 5-semialdehyde: step 1/1. In terms of biological role, oxidoreductase that catalyzes the last step in proline biosynthesis, which corresponds to the reduction of pyrroline-5-carboxylate (P5C) to L-proline using NAD(P)H. Proline is synthesized from either glutamate or ornithine; both are converted to P5C, and then to proline via pyrroline-5-carboxylate reductases (PYCRs). PYCR3 is exclusively linked to the biosynthesis of proline from ornithine. This is Pyrroline-5-carboxylate reductase 3 from Bos taurus (Bovine).